The sequence spans 247 residues: Inhibitory synaptic factor 1 (247 aa).

Residues 30–65 (RAVIGQLEGILRDLKEVAKELKEVVEQIDRLTSDFE) adopt a coiled-coil conformation. Disordered regions lie at residues 69-90 (DTDD…GGPL), 112-166 (ASTP…RDRV), and 180-217 (DDSE…GVRK). The span at 76–85 (GTVSSTSSSE) shows a compositional bias: polar residues.

Belongs to the INSYN1 family.

It localises to the postsynaptic density. In terms of biological role, may be a component of the protein machinery at the inhibitory synapses, probably acting as a scaffold. The chain is Inhibitory synaptic factor 1 from Xenopus laevis (African clawed frog).